A 405-amino-acid chain; its full sequence is Acetylornithine aminotransferase 1 (405 aa).

Residues 108–109 (GA) and F141 contribute to the pyridoxal 5'-phosphate site. R144 is a N(2)-acetyl-L-ornithine binding site. 226-229 (DEVQ) provides a ligand contact to pyridoxal 5'-phosphate. The residue at position 255 (K255) is an N6-(pyridoxal phosphate)lysine. N(2)-acetyl-L-ornithine is bound at residue T283. T284 is a pyridoxal 5'-phosphate binding site.

Belongs to the class-III pyridoxal-phosphate-dependent aminotransferase family. ArgD subfamily. In terms of assembly, homodimer. Requires pyridoxal 5'-phosphate as cofactor.

The protein localises to the cytoplasm. It catalyses the reaction N(2)-acetyl-L-ornithine + 2-oxoglutarate = N-acetyl-L-glutamate 5-semialdehyde + L-glutamate. Its pathway is amino-acid biosynthesis; L-arginine biosynthesis; N(2)-acetyl-L-ornithine from L-glutamate: step 4/4. The polypeptide is Acetylornithine aminotransferase 1 (Pseudomonas syringae pv. tomato (strain ATCC BAA-871 / DC3000)).